Consider the following 136-residue polypeptide: Small ribosomal subunit protein bS6 (136 aa).

Residues 96 to 136 (VTEPSALARSGSDAEADRAPADEGSVEAAGAEPGSEAEAEA) form a disordered region.

This sequence belongs to the bacterial ribosomal protein bS6 family.

Functionally, binds together with bS18 to 16S ribosomal RNA. The chain is Small ribosomal subunit protein bS6 from Methylococcus capsulatus (strain ATCC 33009 / NCIMB 11132 / Bath).